Consider the following 197-residue polypeptide: GTP cyclohydrolase-2 (197 aa).

49–53 (RVHSE) contributes to the GTP binding site. Positions 54, 65, and 67 each coordinate Zn(2+). GTP-binding positions include Q70, 92–94 (EGR), and T114. Catalysis depends on D126, which acts as the Proton acceptor. The Nucleophile role is filled by R128. T149 and K154 together coordinate GTP.

It belongs to the GTP cyclohydrolase II family. Homodimer. The cofactor is Zn(2+).

It carries out the reaction GTP + 4 H2O = 2,5-diamino-6-hydroxy-4-(5-phosphoribosylamino)-pyrimidine + formate + 2 phosphate + 3 H(+). Its pathway is cofactor biosynthesis; riboflavin biosynthesis; 5-amino-6-(D-ribitylamino)uracil from GTP: step 1/4. Its function is as follows. Catalyzes the conversion of GTP to 2,5-diamino-6-ribosylamino-4(3H)-pyrimidinone 5'-phosphate (DARP), formate and pyrophosphate. The polypeptide is GTP cyclohydrolase-2 (Pectobacterium atrosepticum (strain SCRI 1043 / ATCC BAA-672) (Erwinia carotovora subsp. atroseptica)).